The following is a 525-amino-acid chain: Lymphocyte activation gene 3 protein (525 aa).

The signal sequence occupies residues 1–22 (MWEAQFLGLLFLQPLWVAPVKP). Topologically, residues 23-450 (LQPGAEVPVV…APGALPAGHL (428 aa)) are extracellular. The region spanning 37–167 (GAPAQLPCSP…LSCRLRLRLG (131 aa)) is the Ig-like V-type domain. The interaction with FGL1 stretch occupies residues 37 to 252 (GAPAQLPCSP…LTYRDGFNVS (216 aa)). Residues Cys44 and Cys160 are joined by a disulfide bond. The tract at residues 62-97 (TWQHQPDSGPPAAAPGHPLAPGPHPAAPSSWGPRPR) is disordered. The span at 69 to 87 (SGPPAAAPGHPLAPGPHPA) shows a compositional bias: pro residues. Residues 168-252 (QASMTASPPG…LTYRDGFNVS (85 aa)) form the Ig-like C2-type 1 domain. The N-linked (GlcNAc...) asparagine glycan is linked to Asn188. A disulfide bridge links Cys189 with Cys241. 2 N-linked (GlcNAc...) asparagine glycosylation sites follow: Asn250 and Asn256. 2 consecutive Ig-like C2-type domains span residues 265-343 (PTPL…QQLN) and 348-419 (LAII…QGER). Cys282 and Cys333 form a disulfide bridge. Asn343 is a glycosylation site (N-linked (GlcNAc...) asparagine). Cys369 and Cys412 form a disulfide bridge. A connecting peptide region spans residues 429–450 (ELSSPGAQRSGRAPGALPAGHL). A helical transmembrane segment spans residues 451-471 (LLFLILGVLSLLLLVTGAFGF). Over 472-525 (HLWRRQWRPRRFSALEQGIHPPQAQSKIEELEQEPEPEPEPEPEPEPEPEPEQL) the chain is Cytoplasmic. Residues 487–525 (EQGIHPPQAQSKIEELEQEPEPEPEPEPEPEPEPEPEQL) are disordered. Positions 498–503 (KIEELE) match the KIEELE motif motif. The tract at residues 501–524 (ELEQEPEPEPEPEPEPEPEPEPEQ) is 12 X 2 AA tandem repeats of E-X. Residues 502–525 (LEQEPEPEPEPEPEPEPEPEPEQL) are compositionally biased toward acidic residues.

Belongs to the LAG3 family. As to quaternary structure, interacts with MHC class II (MHC-II); selectively recognizes stable complexes of peptide and MHC-II. Interacts with FGL1 (via the Fibrinogen C-terminal domain). In terms of processing, proteolytically cleaved by ADAM10 and ADAM17 within the connecting peptide region, leading to release of Secreted lymphocyte activation gene 3 protein (sLAG-3). ADAM10 mediates constitutive cleavage, but cleavage increases following T-cell activation, whereas shedding by ADAM17 is induced by TCR signaling in a PRKCQ-dependent manner. Primarily expressed in activated T-cells and a subset of natural killer (NK) cells.

The protein resides in the cell membrane. It is found in the secreted. In terms of biological role, lymphocyte activation gene 3 protein: Inhibitory receptor on antigen activated T-cells. Delivers inhibitory signals upon binding to ligands, such as FGL1. FGL1 constitutes a major ligand of LAG3 and is responsible for LAG3 T-cell inhibitory function. Following TCR engagement, LAG3 associates with CD3-TCR in the immunological synapse and directly inhibits T-cell activation. May inhibit antigen-specific T-cell activation in synergy with PDCD1/PD-1, possibly by acting as a coreceptor for PDCD1/PD-1. Negatively regulates the proliferation, activation, effector function and homeostasis of both CD8(+) and CD4(+) T-cells. Also mediates immune tolerance: constitutively expressed on a subset of regulatory T-cells (Tregs) and contributes to their suppressive function. Also acts as a negative regulator of plasmacytoid dendritic cell (pDCs) activation. Binds MHC class II (MHC-II); the precise role of MHC-II-binding is however unclear. May function as a ligand for MHC class II (MHC-II) on antigen-presenting cells (APC), promoting APC activation/maturation and driving Th1 immune response. The sequence is that of Lymphocyte activation gene 3 protein from Homo sapiens (Human).